The primary structure comprises 520 residues: MSLLIKNGTIVNDDAIFKSDVLVLDGRIVEIAPSIQPTPGLEVVDATDRLVIPGGIDPHTHMQLPFMGEIAKDDFHRGTEAAVAGGTTMIIDFVIPTKGESLLVAYDRWRGWADPKVVCDYGLSMAITSWGPEIAKEMEIVTGAEYGINSFKFFLAYAGVFMVRDEEFYQGMIQCAKLRALARVHAENGSVIAERCEHLLSSGITGPEGHTQSRPEELEAEATFRACTMASQANCPLYVVHVMSKGAAAAIAHHRKKGAVVFGEPIAAGLATDGSHYYNEDWLHAARYVMSPPLSRDPSTPSALMKLLAAGELHLTATDNCTFDCQQKSLGKDDFTKIPNGVNGVEDRMSVVWDKGVHAGIIDPMRFVAVTSTMAAKIFNCYPQKGRIAVGSDADIVIWNANATRTISKDTHHHAIDFNIFEGMQVHGVPEITISRGRTVWANGQLKTVQGSGQFIPLAPDSQIVFSAVDNRKKAMEPVKIDRIPYEPSALQTPDANANIVVKAPVRAAIPPGGASSIQF.

Residues histidine 59, histidine 61, and lysine 152 each contribute to the Zn(2+) site. Lysine 152 is modified (N6-carboxylysine). Tyrosine 157 lines the substrate pocket. Positions 185 and 241 each coordinate Zn(2+). A substrate-binding site is contributed by serine 291. Aspartate 319 contacts Zn(2+). Asparagine 340 serves as a coordination point for substrate.

Belongs to the metallo-dependent hydrolases superfamily. Hydantoinase/dihydropyrimidinase family. As to quaternary structure, homotetramer. It depends on Zn(2+) as a cofactor. Carboxylation allows a single lysine to coordinate two zinc ions. Body wall muscles.

The enzyme catalyses 5,6-dihydrouracil + H2O = 3-(carbamoylamino)propanoate + H(+). The protein is Dihydropyrimidinase 2 (dhp-2) of Caenorhabditis elegans.